A 190-amino-acid chain; its full sequence is uncharacterized protein (190 aa).

In terms of domain architecture, HTH tetR-type spans 1–58 (MDKRILAETFRLIKQKGFSFTMNDLAAALGTSKRTLYAYYSSKDQLVEAVVEQFIAEM). The segment at residues 21 to 40 (TMNDLAAALGTSKRTLYAYY) is a DNA-binding region (H-T-H motif).

This is an uncharacterized protein from Bacillus subtilis (strain 168).